Reading from the N-terminus, the 427-residue chain is Histidinol dehydrogenase (427 aa).

Substrate contacts are provided by serine 232, glutamine 254, and histidine 257. Residues glutamine 254 and histidine 257 each coordinate Zn(2+). Catalysis depends on proton acceptor residues glutamate 322 and histidine 323. Substrate-binding residues include histidine 323, aspartate 356, glutamate 410, and histidine 415. Aspartate 356 contacts Zn(2+). Histidine 415 is a Zn(2+) binding site.

The protein belongs to the histidinol dehydrogenase family. The cofactor is Zn(2+).

It catalyses the reaction L-histidinol + 2 NAD(+) + H2O = L-histidine + 2 NADH + 3 H(+). The protein operates within amino-acid biosynthesis; L-histidine biosynthesis; L-histidine from 5-phospho-alpha-D-ribose 1-diphosphate: step 9/9. Its function is as follows. Catalyzes the sequential NAD-dependent oxidations of L-histidinol to L-histidinaldehyde and then to L-histidine. This chain is Histidinol dehydrogenase, found in Listeria innocua serovar 6a (strain ATCC BAA-680 / CLIP 11262).